The primary structure comprises 918 residues: MNESNDELTLNNYLPSQVEQKWQKRWDSLRAFSPNPSDNGDPFCIVIPPPNVTGSLHMGHAFNTALIDVIIRFQRLLGKNVLCLPGTDHASIAVQTILEKQLKTEGKNSEDIGREEFLKRAWIWKEQSGGKIISQLKRIGYSVDWERERFTLDEKLNEAVVEAFNILHEKKLIYRGEYLVNWCPASQSAVSDLEVEMQEVNGYLWHFKYPLISDQGQILDKYLEVATTRPETLLGDTALAVNPNDERYKKYIDKKVKVPFVDREIPVISDIHVDKDFGTGCVKVTPAHDPNDFAIGKRNNLKQINIMNKDGTLNINAGKFQDLDRFDARKKIIKELDTLGLLTKIENYKNTVPFSDRGKVPIEPLLSTQWFLKMDNISSSCLKELDSKKPTFIPQRWEKVYKDWLDNINDWCISRQLWWGHQIPAWYVLKQSEDSIDQNTPYVVARNEKEALSKATKEFGSNLQLIRDKDVLDTWFSSGLWPFSTLGWPNINDADFKKWYPNSVLITGFDIIFFWVARMTMMGKTFTNNIPFKDVYIHGLVRDENNKKMSKSSGNGIDPLLLIDKYGSDALRFALLREVAGAGQDIRLDYDRKENTSSTVEASRNFANKLWNATKFVLINKTFSENCSLNESDEKNLELSDKWILSKLNQLNTKVSNLLIEYKLGESAKLLYEFAWNDFCDWYVEFAKQKFNNKETHNRKISEKILIKVLTDVLVMMHPFMPHITEELWHKLQIKPEQILLSLQKWPVLEKKYINSQIDKSFHELFEIIRLIRNLRVELGLKPSQLVPVYLISDNVELTNFLKTLIVDIKTFTKSSEVIICKSKDIDKNNFAQSFSGIIGDLEVYLPFNDFVNLEALKDRLTKDLKKVNSDIETLNKRISNKNFIDKAPKEIVDECFAKLKEGNLQSEIINKKLKLLK.

Positions 50-60 (PNVTGSLHMGH) match the 'HIGH' region motif. The 'KMSKS' region signature appears at 548 to 552 (KMSKS). Position 551 (Lys-551) interacts with ATP. Residues 849-883 (NDFVNLEALKDRLTKDLKKVNSDIETLNKRISNKN) are a coiled coil.

This sequence belongs to the class-I aminoacyl-tRNA synthetase family. ValS type 1 subfamily. Monomer.

It localises to the cytoplasm. It catalyses the reaction tRNA(Val) + L-valine + ATP = L-valyl-tRNA(Val) + AMP + diphosphate. Catalyzes the attachment of valine to tRNA(Val). As ValRS can inadvertently accommodate and process structurally similar amino acids such as threonine, to avoid such errors, it has a 'posttransfer' editing activity that hydrolyzes mischarged Thr-tRNA(Val) in a tRNA-dependent manner. In Prochlorococcus marinus subsp. pastoris (strain CCMP1986 / NIES-2087 / MED4), this protein is Valine--tRNA ligase.